A 509-amino-acid polypeptide reads, in one-letter code: Activin receptor type-1 (509 aa).

The first 20 residues, 1–20 (MVDGVMILPVLIMIALPSPS), serve as a signal peptide directing secretion. Over 21 to 123 (MEDEKPKVNP…FPGTQNFHLE (103 aa)) the chain is Extracellular. Residue asparagine 102 is glycosylated (N-linked (GlcNAc...) asparagine). Residues 124–146 (VGLIILSVVFAVCLLACLLGVAL) form a helical membrane-spanning segment. The Cytoplasmic segment spans residues 147-509 (RKFKRRNQER…NSLDKLKTDC (363 aa)). The region spanning 178–207 (STLADLLDHSCTSGSGSGLPFLVQRTVARQ) is the GS domain. The 295-residue stretch at 208–502 (ITLLECVGKG…KTLTKIDNSL (295 aa)) folds into the Protein kinase domain. ATP is bound by residues 214–222 (VGKGRYGEV) and lysine 235. The Proton acceptor role is filled by aspartate 336. Serine 501 carries the phosphoserine modification.

Belongs to the protein kinase superfamily. TKL Ser/Thr protein kinase family. TGFB receptor subfamily. In terms of assembly, interacts with FKBP1A. Interacts with FCHO1. Interacts with CLU. Interacts with type II receptors AMHR2 and ACVR2A. Interacts with BMP7. Interacts with GDF2/BMP9. Interacts with BMP6 (when glycosylated); the interaction may induce HAMP expression. Interacts with TSC22D1/TSC-22. It depends on Mg(2+) as a cofactor. Requires Mn(2+) as cofactor. In terms of tissue distribution, expressed in normal parenchymal cells, endothelial cells, fibroblasts and tumor-derived epithelial cells.

It localises to the membrane. It catalyses the reaction L-threonyl-[receptor-protein] + ATP = O-phospho-L-threonyl-[receptor-protein] + ADP + H(+). The catalysed reaction is L-seryl-[receptor-protein] + ATP = O-phospho-L-seryl-[receptor-protein] + ADP + H(+). Functionally, bone morphogenetic protein (BMP) type I receptor that is involved in a wide variety of biological processes, including bone, heart, cartilage, nervous, and reproductive system development and regulation. As a type I receptor, forms heterotetrameric receptor complexes with the type II receptors AMHR2, ACVR2A or ACVR2B. Upon binding of ligands such as BMP7 or GDF2/BMP9 to the heteromeric complexes, type II receptors transphosphorylate ACVR1 intracellular domain. In turn, ACVR1 kinase domain is activated and subsequently phosphorylates SMAD1/5/8 proteins that transduce the signal. In addition to its role in mediating BMP pathway-specific signaling, suppresses TGFbeta/activin pathway signaling by interfering with the binding of activin to its type II receptor. Besides canonical SMAD signaling, can activate non-canonical pathways such as p38 mitogen-activated protein kinases/MAPKs. May promote the expression of HAMP, potentially via its interaction with BMP6. This is Activin receptor type-1 (ACVR1) from Homo sapiens (Human).